Here is a 72-residue protein sequence, read N- to C-terminus: Large ribosomal subunit protein uL29 (72 aa).

It belongs to the universal ribosomal protein uL29 family.

This chain is Large ribosomal subunit protein uL29, found in Chlamydia abortus (strain DSM 27085 / S26/3) (Chlamydophila abortus).